Consider the following 400-residue polypeptide: 3-hydroxykynurenine transaminase (400 aa).

The tract at residues Ser-43–Asn-44 is binds to and confers specificity for 3-hydroxykynurenine; shared with dimeric partner. Residues Ser-77 to His-79, Ser-154, and Gln-204 contribute to the pyridoxal 5'-phosphate site. Ser-154 serves as a coordination point for substrate. At Lys-205 the chain carries N6-(pyridoxal phosphate)lysine. Pyridoxal 5'-phosphate contacts are provided by Tyr-256 and Thr-259. Arg-356 is a binding site for substrate.

The protein belongs to the class-V pyridoxal-phosphate-dependent aminotransferase family. Homodimer. May form homotetramer. Requires pyridoxal 5'-phosphate as cofactor.

The protein resides in the peroxisome. The catalysed reaction is glyoxylate + L-alanine = glycine + pyruvate. The enzyme catalyses L-kynurenine + glyoxylate = kynurenate + glycine + H2O. It catalyses the reaction 3-hydroxy-L-kynurenine + glyoxylate = xanthurenate + glycine + H2O. It carries out the reaction 3-hydroxy-L-kynurenine + pyruvate = xanthurenate + L-alanine + H2O. The catalysed reaction is L-kynurenine + pyruvate = kynurenate + L-alanine + H2O. The enzyme catalyses 2-oxobutanoate + L-alanine = (2S)-2-aminobutanoate + pyruvate. It catalyses the reaction L-phenylalanine + pyruvate = 3-phenylpyruvate + L-alanine. It carries out the reaction L-serine + pyruvate = 3-hydroxypyruvate + L-alanine. The catalysed reaction is L-cysteine + pyruvate = 2-oxo-3-sulfanylpropanoate + L-alanine. The enzyme catalyses 3-hydroxy-L-kynurenine + oxaloacetate = 4-(2-amino-3-hydroxyphenyl)-2,4-dioxobutanoate + L-aspartate. It catalyses the reaction 3-hydroxy-L-kynurenine + 3-phenylpyruvate = 4-(2-amino-3-hydroxyphenyl)-2,4-dioxobutanoate + L-phenylalanine. It carries out the reaction L-kynurenine + oxaloacetate = 4-(2-aminophenyl)-2,4-dioxobutanoate + L-aspartate. The catalysed reaction is 3-phenylpyruvate + L-kynurenine = 4-(2-aminophenyl)-2,4-dioxobutanoate + L-phenylalanine. The protein operates within amino-acid degradation; L-kynurenine degradation; kynurenate from L-kynurenine: step 1/2. Catalyzes the pyridoxal 5'-phosphate-dependent transamination of both 3-hydroxykynurenine and L-kynurenine to xanthurenic acid and kynurenic acid, respectively, preferentially using the alpha-ketoacid pyruvate, glyoxylate or oxaloacetate as the amino group acceptor. The affinity and catalytic efficiency for 3-hydroxykynurenine is higher than for L-kynurenine. Involved in the detoxification of cytotoxic metabolite 3-hydroxykynurenine generated by the hydroxylation of L-kynurenine, an intermediate in the tryptophan catabolism pathway. Also catalyzes, although with a lesser efficiency, the transamination of alanine with glyoxylate as an amino group acceptor. May play a role in the detoxification of glyoxylate, a toxic plant metabolite from the diet. The chain is 3-hydroxykynurenine transaminase from Aedes aegypti (Yellowfever mosquito).